The following is a 306-amino-acid chain: Dihydroorotate dehydrogenase B (NAD(+)), catalytic subunit (306 aa).

Residues Ser-22 and 46–47 contribute to the FMN site; that span reads KG. Residues Lys-46 and 70-74 each bind substrate; that span reads NAIGL. The FMN site is built by Asn-100 and Asn-128. Substrate is bound at residue Asn-128. Cys-131 functions as the Nucleophile in the catalytic mechanism. Residues Lys-167 and Ile-193 each coordinate FMN. 194–195 contributes to the substrate binding site; sequence NT. FMN-binding positions include Gly-219, 245–246, and 267–268; these read GG and GT.

The protein belongs to the dihydroorotate dehydrogenase family. Type 1 subfamily. Heterotetramer of 2 PyrK and 2 PyrD type B subunits. The cofactor is FMN.

It localises to the cytoplasm. It carries out the reaction (S)-dihydroorotate + NAD(+) = orotate + NADH + H(+). It functions in the pathway pyrimidine metabolism; UMP biosynthesis via de novo pathway; orotate from (S)-dihydroorotate (NAD(+) route): step 1/1. In terms of biological role, catalyzes the conversion of dihydroorotate to orotate with NAD(+) as electron acceptor. This chain is Dihydroorotate dehydrogenase B (NAD(+)), catalytic subunit (pyrD), found in Solidesulfovibrio magneticus (strain ATCC 700980 / DSM 13731 / RS-1) (Desulfovibrio magneticus).